The primary structure comprises 327 residues: Undecaprenyl-phosphate 4-deoxy-4-formamido-L-arabinose transferase (327 aa).

The next 2 membrane-spanning stretches (helical) occupy residues 233 to 253 and 268 to 288; these read ILSL…LLLI and VFTL…GMGL.

Belongs to the glycosyltransferase 2 family.

It is found in the cell inner membrane. The enzyme catalyses UDP-4-deoxy-4-formamido-beta-L-arabinose + di-trans,octa-cis-undecaprenyl phosphate = 4-deoxy-4-formamido-alpha-L-arabinopyranosyl di-trans,octa-cis-undecaprenyl phosphate + UDP. It functions in the pathway glycolipid biosynthesis; 4-amino-4-deoxy-alpha-L-arabinose undecaprenyl phosphate biosynthesis; 4-amino-4-deoxy-alpha-L-arabinose undecaprenyl phosphate from UDP-4-deoxy-4-formamido-beta-L-arabinose and undecaprenyl phosphate: step 1/2. The protein operates within bacterial outer membrane biogenesis; lipopolysaccharide biosynthesis. Its function is as follows. Catalyzes the transfer of 4-deoxy-4-formamido-L-arabinose from UDP to undecaprenyl phosphate. The modified arabinose is attached to lipid A and is required for resistance to polymyxin and cationic antimicrobial peptides. The protein is Undecaprenyl-phosphate 4-deoxy-4-formamido-L-arabinose transferase of Pectobacterium carotovorum subsp. carotovorum (strain PC1).